The chain runs to 509 residues: Transcription factor SOX-9 (509 aa).

2 disordered regions span residues 1 to 67 (MNLL…SEED) and 160 to 273 (RLRV…FRDV). Residues 30–41 (SAGSPCPSGSGS) are compositionally biased toward low complexity. Residues 42-52 (DTENTRPQENT) are compositionally biased toward polar residues. 2 stretches are compositionally biased toward basic and acidic residues: residues 56–67 (GEPDLKKESEED) and 160–174 (RLRV…DYKY). The interval 63–103 (ESEEDKFPVCIREAVSQVLKGYDWTLVPMPVRVNGSSKNKP) is dimerization (DIM). The tract at residues 63–103 (ESEEDKFPVCIREAVSQVLKGYDWTLVPMPVRVNGSSKNKP) is PQA. Ser-64 bears the Phosphoserine mark. The HMG box DNA-binding region spans 105–173 (VKRPMNAFMV…QHKKDHPDYK (69 aa)). Ser-211 carries the phosphoserine modification. A transactivation domain (TAM) region spans residues 224-307 (PGEHSGQSQG…LPPNGHPGVP (84 aa)). 2 short sequence motifs (9aaTAD) span residues 275 to 284 (IGELSSDVIS) and 290 to 298 (DVNEFDQYL). The segment at 334 to 415 (VWMSKQQAPP…HYSEQQQHSP (82 aa)) is disordered. The span at 341–376 (APPPPPQQPPQAPPAPQAPPQPQAAPPQQPAAPPQQ) shows a compositional bias: pro residues. Positions 380 to 415 (HTLTTLSSEPGQSQRTHIKTEQLSPSHYSEQQQHSP) are enriched in polar residues. A transactivation domain (TAC) region spans residues 394–509 (RTHIKTEQLS…QPVYTQLTRP (116 aa)). Lys-398 is covalently cross-linked (Glycyl lysine isopeptide (Lys-Gly) (interchain with G-Cter in ubiquitin)). Residues 460-468 (TGLYSTFTY) carry the 9aaTAD 3 motif. The segment at 479 to 509 (PIADTSGVPSIPQTHSPQHWEQPVYTQLTRP) is disordered. Over residues 485–509 (GVPSIPQTHSPQHWEQPVYTQLTRP) the composition is skewed to polar residues.

In terms of assembly, homodimer; homodimerization is required for activity. Interacts (via C-terminus) with ZNF219; forming a complex that binds to the COL2A1 promoter and activates COL2A1 expression. Interacts with DDRGK1. Interacts with EP300/p300. Interacts with beta-catenin (CTNNB1); inhibiting CTNNB1 activity by competing with the binding sites of TCF/LEF within CTNNB1. Post-translationally, acetylated; acetylation impairs nuclear localization and ability to transactivate expression of target genes. Deacetylated by SIRT1. In terms of processing, phosphorylation at Ser-64 and Ser-211 by PKA increases transcriptional activity and may help delay chondrocyte maturation downstream of PTHLH/PTHrP signaling. Phosphorylation at either Ser-64 or Ser-211 is required for sumoylation, but phosphorylation is not dependent on sumoylation. Phosphorylated on tyrosine residues; tyrosine dephosphorylation by PTPN11/SHP2 blocks SOX9 phosphorylation by PKA and subsequent SUMOylation. Sumoylated; phosphorylation at either Ser-64 or Ser-211 is required for sumoylation. Sumoylation is induced by BMP signaling pathway. Post-translationally, ubiquitinated; ubiquitination leads to proteasomal degradation and is negatively regulated by DDRGK1.

Its subcellular location is the nucleus. Its function is as follows. Transcription factor that plays a key role in chondrocytes differentiation and skeletal development. Specifically binds the 5'-ACAAAG-3' DNA motif present in enhancers and super-enhancers and promotes expression of genes important for chondrogenesis, including cartilage matrix protein-coding genes COL2A1, COL4A2, COL9A1, COL11A2 and ACAN, SOX5 and SOX6. Also binds to some promoter regions. Plays a central role in successive steps of chondrocyte differentiation. Absolutely required for precartilaginous condensation, the first step in chondrogenesis during which skeletal progenitors differentiate into prechondrocytes. Together with SOX5 and SOX6, required for overt chondrogenesis when condensed prechondrocytes differentiate into early stage chondrocytes, the second step in chondrogenesis. Later, required to direct hypertrophic maturation and block osteoblast differentiation of growth plate chondrocytes: maintains chondrocyte columnar proliferation, delays prehypertrophy and then prevents osteoblastic differentiation of chondrocytes by lowering beta-catenin (CTNNB1) signaling and RUNX2 expression. Also required for chondrocyte hypertrophy, both indirectly, by keeping the lineage fate of chondrocytes, and directly, by remaining present in upper hypertrophic cells and transactivating COL10A1 along with MEF2C. Low lipid levels are the main nutritional determinant for chondrogenic commitment of skeletal progenitor cells: when lipids levels are low, FOXO (FOXO1 and FOXO3) transcription factors promote expression of SOX9, which induces chondrogenic commitment and suppresses fatty acid oxidation. Mechanistically, helps, but is not required, to remove epigenetic signatures of transcriptional repression and deposit active promoter and enhancer marks at chondrocyte-specific genes. Acts in cooperation with the Hedgehog pathway-dependent GLI (GLI1 and GLI3) transcription factors. In addition to cartilage development, also acts as a regulator of proliferation and differentiation in epithelial stem/progenitor cells: involved in the lung epithelium during branching morphogenesis, by balancing proliferation and differentiation and regulating the extracellular matrix. Controls epithelial branching during kidney development. The protein is Transcription factor SOX-9 (SOX9) of Callithrix jacchus (White-tufted-ear marmoset).